The primary structure comprises 430 residues: MIOREX complex component 4 (430 aa).

The transit peptide at 1-27 (MTVLYTSASLKKMKCLAFNMGMNCVRT) directs the protein to the mitochondrion. Residues 403-420 (FLISLSALLASFFAYYRY) traverse the membrane as a helical segment.

In terms of assembly, associates with the mitochondrial ribosome.

It localises to the mitochondrion. It is found in the mitochondrion membrane. In terms of biological role, component of MIOREX complexes, large expressome-like assemblies of ribosomes with factors involved in all the steps of post-transcriptional gene expression. The polypeptide is MIOREX complex component 4 (Saccharomyces cerevisiae (strain ATCC 204508 / S288c) (Baker's yeast)).